Here is a 672-residue protein sequence, read N- to C-terminus: Hydrogenase-4 component B (672 aa).

Residues 1-5 (MDALQ) are Periplasmic-facing. A helical membrane pass occupies residues 6–26 (LLTWSLILYLFASLASLFLLG). The Cytoplasmic portion of the chain corresponds to 27-30 (LDRL). A helical transmembrane segment spans residues 31 to 51 (AIKLSGITSLVGGVIGIISGI). Residues 52 to 79 (TQLHAGVTLVARFAPPFEFADLTLRMDS) are Periplasmic-facing. The chain crosses the membrane as a helical span at residues 80–100 (LSAFMVLVISLLVVVCSLYSL). The Cytoplasmic segment spans residues 101–119 (TYMREYEGKGAAAMGFFMN). Residues 120–140 (IFIASMVALLVMDNAFWFIVL) traverse the membrane as a helical segment. The Periplasmic segment spans residues 141–164 (FEMMSLSSWFLVIARQDKTSINAG). A helical membrane pass occupies residues 165 to 185 (MLYFFIAHAGSVLIMIAFLLM). The Cytoplasmic portion of the chain corresponds to 186 to 199 (GRESGSLDFASFRT). A helical membrane pass occupies residues 200–220 (LSLSPGLASAVFLLAFFGFGA). Topologically, residues 221–242 (KAGMMPLHSWLPRAHPAAPSHA) are periplasmic. Residues 243–263 (SALMSGVMVKIGIFGILKVAM) form a helical membrane-spanning segment. Residues 264–272 (DLLAQTGLP) are Cytoplasmic-facing. The helical transmembrane segment at 273–293 (LWWGILVMAIGAISALLGVLY) threads the bilayer. The Periplasmic portion of the chain corresponds to 294-311 (ALAEQDIKRLLAWSTVEN). Residues 312–332 (VGIILLAVGVAMVGLSLHDPL) traverse the membrane as a helical segment. Residues 333 to 342 (LTVVGLLGAL) are Cytoplasmic-facing. Residues 343–363 (FHLLNHALFKGLLFLGAGAII) form a helical membrane-spanning segment. The Periplasmic segment spans residues 364 to 384 (SRLHTHDMEKMGALAKRMPWT). A helical transmembrane segment spans residues 385–405 (AAACLIGCLAISAIPPLNGFI). Residues 406–427 (SEWYTWQSLFSLSRVEAVALQL) lie on the Cytoplasmic side of the membrane. Residues 428–448 (AGPIAMVMLAVTGGLAVMCFV) form a helical membrane-spanning segment. Residues 449–474 (KMYGITFCGAPRSTHAEEAQEVPNTM) are Periplasmic-facing. Residues 475-495 (IVAMLLLAALCVLIALSASWL) form a helical membrane-spanning segment. Over 496–504 (APKIMHIAH) the chain is Cytoplasmic. Residues 505–525 (AFTNTPPATVASGIALVPGTF) form a helical membrane-spanning segment. Topologically, residues 526–531 (HTQVTP) are periplasmic. Residues 532–552 (SLLLLLLLAMPLLPGLYWLWC) form a helical membrane-spanning segment. The Cytoplasmic portion of the chain corresponds to 553 to 651 (RSRRAAFRRT…KEIQHLQSGD (99 aa)). Residues 652–672 (FRLYCLYVVAALVVLLIAIAV) form a helical membrane-spanning segment.

This sequence belongs to the complex I subunit 5 family.

The protein resides in the cell inner membrane. Its function is as follows. Possible component of hydrogenase 4. The polypeptide is Hydrogenase-4 component B (Escherichia coli (strain K12)).